A 487-amino-acid polypeptide reads, in one-letter code: MGSLSSSDYSKKPHAVCIPYPAQGHINPMLKLAKLLHYKGFHITFVNTEFNHKRLLKSRGSDSLKGLHSFQFKTIPDGLPPSDVDATQDIPSLCESTTTHCLVPFKQLLQKLNDTSSSEVPPVSCVVSDAVMSFTISAAQELDIPEVLFWTPSACGVLGYMHYAQLIDKGLTPLKDASYFSNGFLDQVLDWIPGMEGIRLRDLPTFLRTTNPDEYMIKFILQETERSKKASAIVLNTFQELESEVIDSLSTLLPPIYPIGPLQILQNQVDDESLKVLGSNLWKEEPECLEWLDTKDPNSVVYVNFGSITVMTNDQLIEFAWGLANSKQNFLWIIRPDLISGESSILGEEFVEETKERGLIASWCHQEQVINHPAIGGFLTHNGWNSTIESISSGVPMICWPFFAEQQTNCRFCCNKWGIGMEINSDVKRDEVESLVKELMVGEKGKEMKKKALEWKNIAEVTTTKPDGSSYSNLEKLIKVLKSKPSH.

Residue His-25 is the Proton acceptor of the active site. Residue His-25 coordinates an anthocyanidin. Asp-129 functions as the Charge relay in the catalytic mechanism. Residues Thr-151, Gln-366, His-381, Trp-384, Asn-385, Ser-386, and Glu-389 each contribute to the UDP-alpha-D-glucose site. Ala-404 lines the an anthocyanidin pocket. Residues Glu-405 and Gln-406 each contribute to the UDP-alpha-D-glucose site.

This sequence belongs to the UDP-glycosyltransferase family. Expressed in roots.

The enzyme catalyses 7-deoxyloganetin + UDP-alpha-D-glucose = 7-deoxyloganin + UDP + H(+). Its function is as follows. Iridoid glucosyltransferase acting exclusively on 7-deoxyloganetin. No activity with 7-deoxyloganetic acid. The protein is 7-deoxyloganetin glucosyltransferase (UGT85A23) of Catharanthus roseus (Madagascar periwinkle).